Consider the following 201-residue polypeptide: GTP cyclohydrolase 1 (201 aa).

Zn(2+) contacts are provided by Cys90, His93, and Cys163.

Belongs to the GTP cyclohydrolase I family. As to quaternary structure, toroid-shaped homodecamer, composed of two pentamers of five dimers.

The catalysed reaction is GTP + H2O = 7,8-dihydroneopterin 3'-triphosphate + formate + H(+). The protein operates within cofactor biosynthesis; 7,8-dihydroneopterin triphosphate biosynthesis; 7,8-dihydroneopterin triphosphate from GTP: step 1/1. The protein is GTP cyclohydrolase 1 of Streptomyces avermitilis (strain ATCC 31267 / DSM 46492 / JCM 5070 / NBRC 14893 / NCIMB 12804 / NRRL 8165 / MA-4680).